Consider the following 162-residue polypeptide: UPF0114 protein PFLU_5318 (162 aa).

The next 3 helical transmembrane spans lie at 15–35 (LLAP…LKFF), 53–73 (LILV…LVMV), and 136–156 (LMWY…MGYL).

Belongs to the UPF0114 family.

It is found in the cell membrane. The chain is UPF0114 protein PFLU_5318 from Pseudomonas fluorescens (strain SBW25).